The primary structure comprises 589 residues: Transcription factor 4 (589 aa).

6 disordered regions span residues 1–124 (MTSR…SSSK), 138–163 (DGHH…MLGN), 184–239 (PSHS…SQTG), 254–297 (HTNN…EGPL), 384–492 (SLLP…MANN), and 556–589 (KRRE…MGQM). 2 positions are modified to phosphoserine: Ser-8 and Ser-13. Polar residues predominate over residues 56-74 (GTLSPTKPGSQYYPYSSNN). The leucine-zipper stretch occupies residues 136 to 157 (MQDGHHSSDPWSSSSGMNQPGY). The segment covering 184-224 (PSHSSADINSSLPPMSTFHRSGTNHYSTSSCTPPANGTDSI) has biased composition (polar residues). Positions 255–266 (TNNSFSSNPSTP) are enriched in low complexity. The span at 283-292 (NGGQASSSPN) shows a compositional bias: polar residues. At Ser-290 the chain carries Phosphoserine. Residues 380-403 (RGSHSLLPNQVPVPQLPVQSATSP) form a class A specific domain region. Low complexity-rich tracts occupy residues 385 to 398 (LLPN…LPVQ) and 421 to 430 (GQSVSSGSSE). Ser-433 is subject to Phosphoserine. Composition is skewed to basic and acidic residues over residues 445 to 461 (KSSE…DIKS) and 477 to 492 (PEQK…MANN). Positions 486-539 (ERRMANNARERLRVRDINEAFKELGRMVQLHLKSDKPQTKLLILHQAVAVILSL) constitute a bHLH domain.

As to quaternary structure, efficient DNA binding requires dimerization with another bHLH protein. Forms homo- or heterooligomers with myogenin. Interacts with HIVEP2. Interacts with NEUROD2. Interacts with AGBL1.

Its subcellular location is the nucleus. Functionally, transcription factor that binds to the immunoglobulin enhancer Mu-E5/KE5-motif. Involved in the initiation of neuronal differentiation. Activates transcription by binding to the E box (5'-CANNTG-3'). Binds to the E-box present in the somatostatin receptor 2 initiator element (SSTR2-INR) to activate transcription. Interacts with the CCAAT displacement protein (CDP2) to bind the tyrosine hydroxylase enhancer. The protein is Transcription factor 4 (Tcf4) of Rattus norvegicus (Rat).